The sequence spans 238 residues: Putative type I specificity subunit S.MpnORF201P (238 aa).

This sequence belongs to the type-I restriction system S methylase family. In terms of assembly, the methyltransferase is composed of M and S polypeptides.

Functionally, the specificity (S) subunit of a type I methyltransferase (MTase); this subunit dictates DNA sequence specificity. The single R subunit has multiple frameshifts and is probably not expressed. This is Putative type I specificity subunit S.MpnORF201P from Mycoplasma pneumoniae (strain ATCC 29342 / M129 / Subtype 1) (Mycoplasmoides pneumoniae).